Consider the following 237-residue polypeptide: Phosphoribosylaminoimidazole-succinocarboxamide synthase (237 aa).

The protein belongs to the SAICAR synthetase family.

It catalyses the reaction 5-amino-1-(5-phospho-D-ribosyl)imidazole-4-carboxylate + L-aspartate + ATP = (2S)-2-[5-amino-1-(5-phospho-beta-D-ribosyl)imidazole-4-carboxamido]succinate + ADP + phosphate + 2 H(+). The protein operates within purine metabolism; IMP biosynthesis via de novo pathway; 5-amino-1-(5-phospho-D-ribosyl)imidazole-4-carboxamide from 5-amino-1-(5-phospho-D-ribosyl)imidazole-4-carboxylate: step 1/2. This is Phosphoribosylaminoimidazole-succinocarboxamide synthase from Enterobacter sp. (strain 638).